The primary structure comprises 145 residues: Brain and acute leukemia cytoplasmic protein (145 aa).

G2 is lipidated: N-myristoyl glycine. Residue C3 is the site of S-palmitoyl cysteine attachment. Residues 3-35 (CGGSRADAIEPRYYESWTRETESTWLTYTDSDA) form an interaction with CAMK2A region. The interval 27 to 120 (WLTYTDSDAP…KRDAKRTSAK (94 aa)) is disordered. The span at 83 to 106 (CGTQCPNPQSLGSGPLTQKQNGLR) shows a compositional bias: polar residues. The segment covering 108 to 119 (TEAKRDAKRTSA) has biased composition (basic and acidic residues).

As to quaternary structure, interacts with CAMK2A. Palmitoylation and myristoylation target the protein to the lipid rafts. Expressed in the brain.

It localises to the cytoplasm. The protein localises to the synapse. It is found in the synaptosome. The protein resides in the membrane raft. Its subcellular location is the postsynaptic density. Functionally, may play a synaptic role at the postsynaptic lipid rafts possibly through interaction with CAMK2A. This chain is Brain and acute leukemia cytoplasmic protein (BAALC), found in Sus scrofa (Pig).